The primary structure comprises 477 residues: ETS translocation variant 1 (477 aa).

The residue at position 94 (serine 94) is a Phosphoserine. Residues 128–179 (PQVGMRPSNPPTPSSTPVSPLHHASPNSTHTPKPDRAFPAHLPPSQSIPDSS) are disordered. Phosphoserine; by RPS6KA1 and RPS6KA5 is present on residues serine 191 and serine 216. Residue lysine 317 forms a Glycyl lysine isopeptide (Lys-Gly) (interchain with G-Cter in SUMO2) linkage. A DNA-binding region (ETS) is located at residues 335–415 (LQLWQFLVAL…AGERYVYKFV (81 aa)).

Belongs to the ETS family. Sumoylated. Post-translationally, phosphorylated at Ser-191 and Ser-216 by RPS6KA1 and RPS6KA5; phosphorylation activates transcriptional activity. As to expression, very highly expressed in brain, highly expressed in testis, lung and heart, moderately in spleen, small intestine, pancreas and colon, weakly in liver, prostate and thymus, very weakly in skeletal muscle, kidney and ovary and not in placenta and peripheral blood leukocytes.

The protein resides in the nucleus. In terms of biological role, transcriptional activator that binds to DNA sequences containing the consensus pentanucleotide 5'-CGGA[AT]-3'. Required for olfactory dopaminergic neuron differentiation; may directly activate expression of tyrosine hydroxylase (TH). The sequence is that of ETS translocation variant 1 from Homo sapiens (Human).